The chain runs to 222 residues: NADH dehydrogenase [ubiquinone] iron-sulfur protein 8-A, mitochondrial (222 aa).

2 4Fe-4S ferredoxin-type domains span residues 114-143 (RRYPTGEERCIACKLCEAVCPAQAITIEAE) and 153-182 (TRYDIDMTKCIYCGFCQEACPVDAIVEGPN). [4Fe-4S] cluster contacts are provided by cysteine 123, cysteine 126, cysteine 129, cysteine 133, cysteine 162, cysteine 165, cysteine 168, and cysteine 172.

It belongs to the complex I 23 kDa subunit family. In terms of assembly, complex I is composed of at least 49 different subunits. This is a component of the iron-sulfur (IP) fragment of the enzyme. Requires [4Fe-4S] cluster as cofactor.

The protein resides in the mitochondrion. It carries out the reaction a ubiquinone + NADH + 5 H(+)(in) = a ubiquinol + NAD(+) + 4 H(+)(out). Functionally, core subunit of the mitochondrial membrane respiratory chain NADH dehydrogenase (Complex I) that is believed to belong to the minimal assembly required for catalysis. Complex I functions in the transfer of electrons from NADH to the respiratory chain. The immediate electron acceptor for the enzyme is believed to be ubiquinone. May donate electrons to ubiquinone. The protein is NADH dehydrogenase [ubiquinone] iron-sulfur protein 8-A, mitochondrial of Arabidopsis thaliana (Mouse-ear cress).